The chain runs to 111 residues: Nucleoid-associated protein Fphi_0115 (111 aa).

Positions 1 to 27 (MNFDMSKLMQQAQKMQEQMKKAQQERE) are disordered. Over residues 17–27 (EQMKKAQQERE) the composition is skewed to basic and acidic residues.

The protein belongs to the YbaB/EbfC family. Homodimer.

It localises to the cytoplasm. Its subcellular location is the nucleoid. Binds to DNA and alters its conformation. May be involved in regulation of gene expression, nucleoid organization and DNA protection. This is Nucleoid-associated protein Fphi_0115 from Francisella philomiragia subsp. philomiragia (strain ATCC 25017 / CCUG 19701 / FSC 153 / O#319-036).